The following is a 322-amino-acid chain: MAENGAARGGTSAGGDSSTPFVELGRADWAELAQSARLPLQEAEIVQLRGLGDPLDMREVGEVYLPLSRLLNLYVGGTRQLHRVTSDFLGERAQATPFVIGVAGSVAVGKSTIARLLRELLSRWDDTPRVELVTTDGFLLPNAELERRGLMRRKGFPESYDRRALLRFVTAVKSGAREVRAPFYSHLSYDIVPGAEIVVRQPDVLIVEGLTVLQPAGGGTRLAVSDLFDFSVYVDARTRDIAHWYQERFLTLQRGAFANPKSYFHRYASLTEEEARARAAAIWADINEPNLTQNIRPTRSRAKLVLRKDADHTVSSVLLRKI.

Gly104–Ser111 serves as a coordination point for ATP.

This sequence belongs to the prokaryotic pantothenate kinase family.

The protein localises to the cytoplasm. It catalyses the reaction (R)-pantothenate + ATP = (R)-4'-phosphopantothenate + ADP + H(+). It functions in the pathway cofactor biosynthesis; coenzyme A biosynthesis; CoA from (R)-pantothenate: step 1/5. The chain is Pantothenate kinase from Leifsonia xyli subsp. xyli (strain CTCB07).